We begin with the raw amino-acid sequence, 433 residues long: Acetyl-CoA-benzylalcohol acetyltransferase (433 aa).

Active-site proton acceptor residues include His152 and Asp377.

The protein belongs to the plant acyltransferase family. In terms of processing, the N-terminus is blocked. In terms of tissue distribution, expressed in petals, style, sepals and stamens. Very low expression in stigma and not detected in leaves.

The catalysed reaction is benzyl alcohol + acetyl-CoA = benzyl acetate + CoA. The enzyme catalyses (E)-cinnamyl alcohol + acetyl-CoA = (E)-cinnamyl acetate + CoA. Involved in the biosynthesis of benzyl acetate, a major constituent of the floral scent. Can use benzylalcohol, cinnamylalcohol, 3-cis-hexene-1-ol or heptanol as substrates. Has some activity with 2-phenylethanol and 2-naphtalene-ethanol, but no activity with linalool, 2-hydroxybenzylalcohol, 3-hydroxybenzylalcohol or 4-hydroxybenzylalcohol. This chain is Acetyl-CoA-benzylalcohol acetyltransferase (BEAT), found in Clarkia breweri (Fairy fans).